The following is a 170-amino-acid chain: 3-hydroxydecanoyl-[acyl-carrier-protein] dehydratase (170 aa).

The active site involves H69.

This sequence belongs to the thioester dehydratase family. FabA subfamily. As to quaternary structure, homodimer.

The protein localises to the cytoplasm. It carries out the reaction a (3R)-hydroxyacyl-[ACP] = a (2E)-enoyl-[ACP] + H2O. The enzyme catalyses (3R)-hydroxydecanoyl-[ACP] = (2E)-decenoyl-[ACP] + H2O. The catalysed reaction is (2E)-decenoyl-[ACP] = (3Z)-decenoyl-[ACP]. It participates in lipid metabolism; fatty acid biosynthesis. Its function is as follows. Necessary for the introduction of cis unsaturation into fatty acids. Catalyzes the dehydration of (3R)-3-hydroxydecanoyl-ACP to E-(2)-decenoyl-ACP and then its isomerization to Z-(3)-decenoyl-ACP. Can catalyze the dehydratase reaction for beta-hydroxyacyl-ACPs with saturated chain lengths up to 16:0, being most active on intermediate chain length. In Caulobacter vibrioides (strain ATCC 19089 / CIP 103742 / CB 15) (Caulobacter crescentus), this protein is 3-hydroxydecanoyl-[acyl-carrier-protein] dehydratase.